Reading from the N-terminus, the 358-residue chain is Fructose-bisphosphate aldolase 2, cytoplasmic (358 aa).

Arginine 39 contacts substrate. Glutamate 183 functions as the Proton acceptor in the catalytic mechanism. Lysine 225 acts as the Schiff-base intermediate with dihydroxyacetone-P in catalysis. Substrate-binding positions include 266-268 (SGG) and arginine 298.

Belongs to the class I fructose-bisphosphate aldolase family. Homotetramer.

It localises to the cytoplasm. It is found in the cytosol. It carries out the reaction beta-D-fructose 1,6-bisphosphate = D-glyceraldehyde 3-phosphate + dihydroxyacetone phosphate. It functions in the pathway carbohydrate degradation; glycolysis; D-glyceraldehyde 3-phosphate and glycerone phosphate from D-glucose: step 4/4. In terms of biological role, fructose-bisphosphate aldolase that plays a key role in glycolysis and gluconeogenesis. The polypeptide is Fructose-bisphosphate aldolase 2, cytoplasmic (Oryza sativa subsp. japonica (Rice)).